The sequence spans 203 residues: ATP-dependent Clp protease proteolytic subunit (203 aa).

The active-site Nucleophile is the Ser103. His128 is a catalytic residue.

This sequence belongs to the peptidase S14 family. Fourteen ClpP subunits assemble into 2 heptameric rings which stack back to back to give a disk-like structure with a central cavity, resembling the structure of eukaryotic proteasomes.

It localises to the cytoplasm. The enzyme catalyses Hydrolysis of proteins to small peptides in the presence of ATP and magnesium. alpha-casein is the usual test substrate. In the absence of ATP, only oligopeptides shorter than five residues are hydrolyzed (such as succinyl-Leu-Tyr-|-NHMec, and Leu-Tyr-Leu-|-Tyr-Trp, in which cleavage of the -Tyr-|-Leu- and -Tyr-|-Trp bonds also occurs).. Functionally, cleaves peptides in various proteins in a process that requires ATP hydrolysis. Has a chymotrypsin-like activity. Plays a major role in the degradation of misfolded proteins. This chain is ATP-dependent Clp protease proteolytic subunit, found in Dichelobacter nodosus (strain VCS1703A).